Here is a 352-residue protein sequence, read N- to C-terminus: Heavy metal-associated isoprenylated plant protein 36 (352 aa).

One can recognise an HMA domain in the interval 29–92 (YTTWVLRVSI…KIMKAGRHAE (64 aa)). C40 and C43 together coordinate a metal cation. Disordered stretches follow at residues 96–150 (TSME…GNFD), 162–211 (QLQP…GPPE), and 229–252 (PHLH…RHHP). Residues 97–107 (SMENNINNDCN) are compositionally biased toward polar residues. Acidic residues predominate over residues 118 to 128 (ETSGDEDDDEN). A compositionally biased stretch (gly residues) spans 133–148 (NGGGDVGGGGGGGGGN). Residues 172–183 (KKKKKKKKKKKS) are compositionally biased toward basic residues. Gly residues predominate over residues 192-203 (EGGGGGGGGGGP). C349 is modified (cysteine methyl ester). Residue C349 is the site of S-farnesyl cysteine attachment. A propeptide spans 350–352 (CVM) (removed in mature form).

Belongs to the HIPP family.

In terms of biological role, heavy-metal-binding protein. This is Heavy metal-associated isoprenylated plant protein 36 from Arabidopsis thaliana (Mouse-ear cress).